The chain runs to 88 residues: Period circadian protein (88 aa).

The segment at 23 to 88 (VTNTSIAGTG…VTLTESLLNK (66 aa)) is disordered. Repeat copies occupy residues 30–31 (GT), 33–34 (GT), 35–36 (GT), 37–38 (GT), 39–40 (GT), 41–42 (GT), 43–44 (GT), 45–46 (GT), 47–48 (GT), 49–50 (GT), 51–52 (GT), 53–54 (GT), 55–56 (GT), 57–58 (GT), 59–60 (GT), and 61–62 (GN). The segment at 30 to 62 (GTGGTGTGTGTGTGTGTGTGTGTGTGTGTGTGN) is 16 X 2 AA tandem repeats of G-[TN]. A compositionally biased stretch (gly residues) spans 30–62 (GTGGTGTGTGTGTGTGTGTGTGTGTGTGTGTGN). The span at 79–88 (VTLTESLLNK) shows a compositional bias: polar residues.

Forms a heterodimer with timeless (TIM); the complex then translocates into the nucleus. Post-translationally, phosphorylated with a circadian rhythmicity, probably by the double-time protein (dbt). Phosphorylation could be implicated in the stability of per monomer and in the formation of heterodimer per-tim.

The protein resides in the nucleus. Its subcellular location is the cytoplasm. It localises to the perinuclear region. Its function is as follows. Essential for biological clock functions. Determines the period length of circadian and ultradian rhythms; an increase in PER dosage leads to shortened circadian rhythms and a decrease leads to lengthened circadian rhythms. Essential for the circadian rhythmicity of locomotor activity, eclosion behavior, and for the rhythmic component of the male courtship song that originates in the thoracic nervous system. The biological cycle depends on the rhythmic formation and nuclear localization of the TIM-PER complex. Light induces the degradation of TIM, which promotes elimination of PER. Nuclear activity of the heterodimer coordinatively regulates PER and TIM transcription through a negative feedback loop. Behaves as a negative element in circadian transcriptional loop. Does not appear to bind DNA, suggesting indirect transcriptional inhibition. The protein is Period circadian protein (per) of Drosophila teissieri (Fruit fly).